Here is a 423-residue protein sequence, read N- to C-terminus: DUF21 domain-containing protein At2g14520 (423 aa).

Residues 1-11 are Extracellular-facing; that stretch reads MAVEYECCGTS. In terms of domain architecture, CNNM transmembrane spans 8–191; it reads CGTSFFIHIA…GKGGELTHDE (184 aa). A helical transmembrane segment spans residues 12-32; it reads FFIHIAVIVLLVLFAGLMSGL. Residues 33–70 are Cytoplasmic-facing; it reads TLGLMSMSLVDLEVLAKSGTPRDRIHAAKILPVVKNQH. A helical membrane pass occupies residues 71-91; sequence LLLCTLLICNAAAMEALPIFL. The Extracellular portion of the chain corresponds to 92–94; that stretch reads DAL. A helical membrane pass occupies residues 95–115; that stretch reads VTAWGAILISVTLILLFGEII. At 116–136 the chain is on the cytoplasmic side; sequence PQSVCSRHGLAIGATVAPFVR. Residues 137–157 traverse the membrane as a helical segment; the sequence is VLVWICLPVAWPISKLLDFLL. Over 158–423 the chain is Extracellular; the sequence is GHGRVALFRR…DETDHHFEDL (266 aa). The 62-residue stretch at 210 to 271 folds into the CBS 1 domain; sequence MTPISDTFVI…TINPDEEIQV (62 aa). N-linked (GlcNAc...) asparagine glycans are attached at residues N273 and N322. 2 CBS domains span residues 275–332 and 356–415; these read TIRR…RVDV and PNRA…IFDE.

Its subcellular location is the membrane. This Arabidopsis thaliana (Mouse-ear cress) protein is DUF21 domain-containing protein At2g14520 (CBSDUF3).